The chain runs to 868 residues: Protein translocase subunit SecA (868 aa).

ATP contacts are provided by residues Q85, 103–107 (GEGKT), and D508.

The protein belongs to the SecA family. In terms of assembly, monomer and homodimer. Part of the essential Sec protein translocation apparatus which comprises SecA, SecYEG and auxiliary proteins SecDF. Other proteins may also be involved.

Its subcellular location is the cell membrane. The protein localises to the cytoplasm. It catalyses the reaction ATP + H2O + cellular proteinSide 1 = ADP + phosphate + cellular proteinSide 2.. Its function is as follows. Part of the Sec protein translocase complex. Interacts with the SecYEG preprotein conducting channel. Has a central role in coupling the hydrolysis of ATP to the transfer of proteins into and across the cell membrane, serving as an ATP-driven molecular motor driving the stepwise translocation of polypeptide chains across the membrane. The protein is Protein translocase subunit SecA of Deinococcus radiodurans (strain ATCC 13939 / DSM 20539 / JCM 16871 / CCUG 27074 / LMG 4051 / NBRC 15346 / NCIMB 9279 / VKM B-1422 / R1).